The sequence spans 466 residues: Methylenetetrahydrofolate--tRNA-(uracil-5-)-methyltransferase TrmFO (466 aa).

14 to 19 (GGGLAG) is a binding site for FAD.

The protein belongs to the MnmG family. TrmFO subfamily. FAD serves as cofactor.

The protein localises to the cytoplasm. The catalysed reaction is uridine(54) in tRNA + (6R)-5,10-methylene-5,6,7,8-tetrahydrofolate + NADH + H(+) = 5-methyluridine(54) in tRNA + (6S)-5,6,7,8-tetrahydrofolate + NAD(+). The enzyme catalyses uridine(54) in tRNA + (6R)-5,10-methylene-5,6,7,8-tetrahydrofolate + NADPH + H(+) = 5-methyluridine(54) in tRNA + (6S)-5,6,7,8-tetrahydrofolate + NADP(+). Catalyzes the folate-dependent formation of 5-methyl-uridine at position 54 (M-5-U54) in all tRNAs. This Brucella suis (strain ATCC 23445 / NCTC 10510) protein is Methylenetetrahydrofolate--tRNA-(uracil-5-)-methyltransferase TrmFO.